Consider the following 208-residue polypeptide: mRNA 3'-end-processing protein YTH1 (208 aa).

5 C3H1-type zinc fingers span residues Asp-28–Pro-59, Phe-61–Asn-88, Leu-89–Pro-117, Ala-118–Lys-145, and Phe-147–Phe-170.

It belongs to the CPSF4/YTH1 family. As to quaternary structure, component of the cleavage and polyadenylation factor (CPF) complex, which is composed of at least PTI1, SYC1, SSU72, GLC7, MPE1, REF2, PFS2, PTA1, YSH1/BRR5, SWD2, CFT2/YDH1, YTH1, CFT1/YHH1, FIP1 and PAP1. Interacts with FIP1 and YSH1.

It localises to the nucleus. Functionally, RNA-binding component of the cleavage and polyadenylation factor (CPF) complex, which plays a key role in polyadenylation-dependent pre-mRNA 3'-end formation and cooperates with cleavage factors including the CFIA complex and NAB4/CFIB. The chain is mRNA 3'-end-processing protein YTH1 (YTH1) from Saccharomyces cerevisiae (strain ATCC 204508 / S288c) (Baker's yeast).